Reading from the N-terminus, the 447-residue chain is Multicopper oxidase mco (447 aa).

A compositionally biased stretch (basic and acidic residues) spans 1–25; the sequence is MMDMKENDQKRNDMMDMKSHDERKN. Residues 1–43 are disordered; that stretch reads MMDMKENDQKRNDMMDMKSHDERKNLNSSQGKNEITFPKVLDP. 12 residues coordinate Cu cation: His-107, His-109, His-147, His-149, His-375, His-378, His-380, His-428, Cys-429, His-430, His-434, and Met-439.

This sequence belongs to the multicopper oxidase family. Cu cation serves as cofactor.

The protein localises to the cytoplasm. In terms of biological role, may be involved in copper homeostasis and oxidative stress response. Oxidizes the substrate 3,3'-dimethoxybenzidine in vitro. Also possesses low levels of phenoloxidase and ferroxidase activities. This Staphylococcus aureus protein is Multicopper oxidase mco (mco).